We begin with the raw amino-acid sequence, 115 residues long: MARTPGALLLAPLLLLQLATPALVYQDYQYLGQQGEGDSWEQLRLQHLKEVEDSILGPWGKWRCLCDLGKQERSREVVGTAPGPVFMDPEKLIQLRPCRQRDCPSCKPFDCDWRL.

Positions 1–21 are cleaved as a signal peptide; that stretch reads MARTPGALLLAPLLLLQLATP. The region spanning 53 to 104 is the TSP type-1 domain; that stretch reads DSILGPWGKWRCLCDLGKQERSREVVGTAPGPVFMDPEKLIQLRPCRQRDCP.

In Homo sapiens (Human), this protein is Thrombospondin type-1 domain-containing protein 8.